Reading from the N-terminus, the 333-residue chain is Tetraacyldisaccharide 4'-kinase (333 aa).

60–67 (TVGGTGKT) serves as a coordination point for ATP.

It belongs to the LpxK family.

The catalysed reaction is a lipid A disaccharide + ATP = a lipid IVA + ADP + H(+). The protein operates within glycolipid biosynthesis; lipid IV(A) biosynthesis; lipid IV(A) from (3R)-3-hydroxytetradecanoyl-[acyl-carrier-protein] and UDP-N-acetyl-alpha-D-glucosamine: step 6/6. In terms of biological role, transfers the gamma-phosphate of ATP to the 4'-position of a tetraacyldisaccharide 1-phosphate intermediate (termed DS-1-P) to form tetraacyldisaccharide 1,4'-bis-phosphate (lipid IVA). The sequence is that of Tetraacyldisaccharide 4'-kinase from Pseudomonas putida (strain GB-1).